The chain runs to 116 residues: Propanediol dehydratase-reactivating factor small subunit (116 aa).

E31 lines the Mg(2+) pocket.

The protein belongs to the DdrB/PduH family. Forms a heterotetramer PduG(2)/PduH(2). Mg(2+) is required as a cofactor.

It is found in the bacterial microcompartment. The catalysed reaction is ATP + H2O = ADP + phosphate + H(+). It functions in the pathway polyol metabolism; 1,2-propanediol degradation. In terms of biological role, small subunit of the propanediol dehydratase-reactivating factor (DDR), which reactivates suicidally inhibited adenosylcobalamin-dependent propanediol dehydratase (diol dehydratase, DDH) found in the bacterial microcompartment (BMC) dedicated to 1,2-propanediol (1,2-PD) degradation. Reactivates inactivated DDH in the presence of ATP, Mg(2+) and free adenosylcobalamin (AdoCbl), by mediating the exchange of the tightly bound damaged cofactor AdoCbl for a free intact one. Its function is as follows. Expression of a cosmid containing the full 21-gene pdu operon in E.coli allows E.coli to grow on 1,2-propanediol (1,2-PD) with the appearance of bacterial microcompartments (BMC) in its cytoplasm. The 1,2-PD-specific bacterial microcompartment (BMC) concentrates low levels of 1,2-PD catabolic enzymes, concentrates volatile reaction intermediates thus enhancing pathway flux and keeps the level of toxic, mutagenic propionaldehyde low. The polypeptide is Propanediol dehydratase-reactivating factor small subunit (Citrobacter freundii).